Reading from the N-terminus, the 119-residue chain is Putative F-box protein At2g39415 (119 aa).

The F-box domain maps to Ile37–Leu92.

In Arabidopsis thaliana (Mouse-ear cress), this protein is Putative F-box protein At2g39415.